The primary structure comprises 266 residues: Large ribosomal subunit protein eL8 (266 aa).

Glycyl lysine isopeptide (Lys-Gly) (interchain with G-Cter in SUMO2) cross-links involve residues K11, K20, and K21. The residue at position 34 (K34) is an N6-acetyllysine. A Glycyl lysine isopeptide (Lys-Gly) (interchain with G-Cter in SUMO2) cross-link involves residue K48. K97 carries the N6-acetyllysine; alternate modification. K97 participates in a covalent cross-link: Glycyl lysine isopeptide (Lys-Gly) (interchain with G-Cter in SUMO2); alternate. K125 participates in a covalent cross-link: Glycyl lysine isopeptide (Lys-Gly) (interchain with G-Cter in SUMO2). K217 carries the post-translational modification N6-acetyllysine. A Glycyl lysine isopeptide (Lys-Gly) (interchain with G-Cter in SUMO2) cross-link involves residue K245.

The protein belongs to the eukaryotic ribosomal protein eL8 family. In terms of assembly, component of the large ribosomal subunit. Interacts with CRY1. Interacts with DICER1, AGO2, TARBP2, MOV10 and EIF6; they form a large RNA-induced silencing complex (RISC).

The protein resides in the cytoplasm. Its function is as follows. Component of the large ribosomal subunit. The ribosome is a large ribonucleoprotein complex responsible for the synthesis of proteins in the cell. This is Large ribosomal subunit protein eL8 (Rpl7a) from Rattus norvegicus (Rat).